We begin with the raw amino-acid sequence, 224 residues long: 4'-phosphopantetheinyl transferase ffp (224 aa).

The Mg(2+) site is built by aspartate 107, glutamate 109, and glutamate 151. The tract at residues 158–189 (GKGLSLPLDSFSVRLHEDGRVSVELPEHHTPC) is peptidyl carrier protein binding.

Belongs to the P-Pant transferase superfamily. Gsp/Sfp/HetI/AcpT family. It depends on Mg(2+) as a cofactor.

The enzyme catalyses apo-[peptidyl-carrier protein] + CoA = holo-[peptidyl-carrier protein] + adenosine 3',5'-bisphosphate + H(+). May activate the peptidyl carrier protein (PCP) domains of fengycin synthase by transferring the 4'-phosphopantetheinyl moiety of coenzyme A (CoA) to a serine residue. In Bacillus subtilis, this protein is 4'-phosphopantetheinyl transferase ffp (ffp).